Reading from the N-terminus, the 283-residue chain is Bifunctional protein FolD 2 (283 aa).

NADP(+) contacts are provided by residues 165-167 (GAS), serine 190, and isoleucine 231.

It belongs to the tetrahydrofolate dehydrogenase/cyclohydrolase family. As to quaternary structure, homodimer.

The enzyme catalyses (6R)-5,10-methylene-5,6,7,8-tetrahydrofolate + NADP(+) = (6R)-5,10-methenyltetrahydrofolate + NADPH. It carries out the reaction (6R)-5,10-methenyltetrahydrofolate + H2O = (6R)-10-formyltetrahydrofolate + H(+). It functions in the pathway one-carbon metabolism; tetrahydrofolate interconversion. Its function is as follows. Catalyzes the oxidation of 5,10-methylenetetrahydrofolate to 5,10-methenyltetrahydrofolate and then the hydrolysis of 5,10-methenyltetrahydrofolate to 10-formyltetrahydrofolate. This is Bifunctional protein FolD 2 from Bordetella pertussis (strain Tohama I / ATCC BAA-589 / NCTC 13251).